The following is a 237-amino-acid chain: Golgi anti-apoptotic protein (237 aa).

Residues Met-1–Val-37 lie on the Cytoplasmic side of the membrane. The helical transmembrane segment at Tyr-38 to Phe-58 threads the bilayer. Residues Asp-59 to Gly-67 are Lumenal-facing. A helical membrane pass occupies residues Ser-68 to Leu-88. Topologically, residues His-89–Pro-94 are cytoplasmic. Residues Leu-95–Val-115 traverse the membrane as a helical segment. A topological domain (lumenal) is located at residue Thr-116. The helical transmembrane segment at Phe-117 to Leu-137 threads the bilayer. Topologically, residues Thr-138–Leu-151 are cytoplasmic. The helical transmembrane segment at Gly-152 to Val-172 threads the bilayer. The Lumenal portion of the chain corresponds to Gln-173 to Asn-174. A helical membrane pass occupies residues Glu-175–Tyr-195. Over Asp-196–Tyr-209 the chain is Cytoplasmic. The segment at residues Val-210–Leu-230 is an intramembrane region (helical). The Cytoplasmic portion of the chain corresponds to Leu-231–Lys-237.

The protein belongs to the BI1 family. LFG subfamily.

The protein localises to the host Golgi apparatus membrane. Its function is as follows. May affect virulence through inhibition of apoptosis. In Vaccinia virus (strain LC16m0) (VACV), this protein is Golgi anti-apoptotic protein (L6).